The following is a 532-amino-acid chain: O-phosphoserine--tRNA(Cys) ligase (532 aa).

Substrate contacts are provided by residues 186 to 188 (HMT), 231 to 233 (SAS), 273 to 274 (YY), and N317.

It belongs to the class-II aminoacyl-tRNA synthetase family. O-phosphoseryl-tRNA(Cys) synthetase subfamily. Homotetramer. Interacts with SepCysS.

It carries out the reaction tRNA(Cys) + O-phospho-L-serine + ATP = O-phospho-L-seryl-tRNA(Cys) + AMP + diphosphate. In terms of biological role, catalyzes the attachment of O-phosphoserine (Sep) to tRNA(Cys). The protein is O-phosphoserine--tRNA(Cys) ligase of Methanothermobacter thermautotrophicus (strain ATCC 29096 / DSM 1053 / JCM 10044 / NBRC 100330 / Delta H) (Methanobacterium thermoautotrophicum).